The primary structure comprises 335 residues: Pyridoxal 5'-phosphate synthase subunit PdxS (335 aa).

Aspartate 30 is a binding site for D-ribose 5-phosphate. Catalysis depends on lysine 87, which acts as the Schiff-base intermediate with D-ribose 5-phosphate. Residue glycine 159 participates in D-ribose 5-phosphate binding. D-glyceraldehyde 3-phosphate is bound at residue arginine 171. D-ribose 5-phosphate-binding positions include glycine 257 and 278–279; that span reads GS.

This sequence belongs to the PdxS/SNZ family. In terms of assembly, in the presence of PdxT, forms a dodecamer of heterodimers.

The catalysed reaction is aldehydo-D-ribose 5-phosphate + D-glyceraldehyde 3-phosphate + L-glutamine = pyridoxal 5'-phosphate + L-glutamate + phosphate + 3 H2O + H(+). The protein operates within cofactor biosynthesis; pyridoxal 5'-phosphate biosynthesis. Its function is as follows. Catalyzes the formation of pyridoxal 5'-phosphate from ribose 5-phosphate (RBP), glyceraldehyde 3-phosphate (G3P) and ammonia. The ammonia is provided by the PdxT subunit. Can also use ribulose 5-phosphate and dihydroxyacetone phosphate as substrates, resulting from enzyme-catalyzed isomerization of RBP and G3P, respectively. The chain is Pyridoxal 5'-phosphate synthase subunit PdxS from Thermococcus gammatolerans (strain DSM 15229 / JCM 11827 / EJ3).